The following is a 388-amino-acid chain: Chorismate synthase (388 aa).

Positions 39 and 45 each coordinate NADP(+). Residues Arg-130–Ser-132, Asn-251–Ala-252, Gly-296, Lys-311–Thr-315, and Arg-337 each bind FMN.

It belongs to the chorismate synthase family. As to quaternary structure, homotetramer. Requires FMNH2 as cofactor.

It carries out the reaction 5-O-(1-carboxyvinyl)-3-phosphoshikimate = chorismate + phosphate. It functions in the pathway metabolic intermediate biosynthesis; chorismate biosynthesis; chorismate from D-erythrose 4-phosphate and phosphoenolpyruvate: step 7/7. Catalyzes the anti-1,4-elimination of the C-3 phosphate and the C-6 proR hydrogen from 5-enolpyruvylshikimate-3-phosphate (EPSP) to yield chorismate, which is the branch point compound that serves as the starting substrate for the three terminal pathways of aromatic amino acid biosynthesis. This reaction introduces a second double bond into the aromatic ring system. The chain is Chorismate synthase from Streptococcus pyogenes serotype M3 (strain SSI-1).